A 299-amino-acid polypeptide reads, in one-letter code: HTH-type transcriptional regulator CynR (299 aa).

The HTH lysR-type domain occupies 1–58 (MLSRHINYFLAVAEHGSFTRAASALHVSQPALSQQIRQLEESLGVPLFDRSGRTIRLT). Residues 18–37 (FTRAASALHVSQPALSQQIR) constitute a DNA-binding region (H-T-H motif).

It belongs to the LysR transcriptional regulatory family.

It localises to the cytoplasm. Positively regulates the cynTSX operon, and negatively regulates its own transcription. Binds specifically to the cynR-cynTSX intergenic region. This chain is HTH-type transcriptional regulator CynR (cynR), found in Escherichia coli (strain K12).